The following is a 503-amino-acid chain: UPF0522 protein C (503 aa).

The N-terminal stretch at 1–18 is a signal peptide; the sequence is MKLFILIILSICLALVNS. 3 N-linked (GlcNAc...) asparagine glycosylation sites follow: asparagine 330, asparagine 337, and asparagine 370.

Belongs to the UPF0522 family.

The protein resides in the secreted. The chain is UPF0522 protein C from Dictyostelium discoideum (Social amoeba).